The chain runs to 477 residues: Methylenetetrahydrofolate--tRNA-(uracil-5-)-methyltransferase TrmFO (477 aa).

15–20 (GAGLAG) contributes to the FAD binding site.

It belongs to the MnmG family. TrmFO subfamily. Requires FAD as cofactor.

It is found in the cytoplasm. The enzyme catalyses uridine(54) in tRNA + (6R)-5,10-methylene-5,6,7,8-tetrahydrofolate + NADH + H(+) = 5-methyluridine(54) in tRNA + (6S)-5,6,7,8-tetrahydrofolate + NAD(+). It carries out the reaction uridine(54) in tRNA + (6R)-5,10-methylene-5,6,7,8-tetrahydrofolate + NADPH + H(+) = 5-methyluridine(54) in tRNA + (6S)-5,6,7,8-tetrahydrofolate + NADP(+). Catalyzes the folate-dependent formation of 5-methyl-uridine at position 54 (M-5-U54) in all tRNAs. This Rhodopseudomonas palustris (strain BisB5) protein is Methylenetetrahydrofolate--tRNA-(uracil-5-)-methyltransferase TrmFO.